Here is a 158-residue protein sequence, read N- to C-terminus: MKQLSFLPGEMTPQDRRLIQRALRALDRHLHEPGVAFTSTHAVREWLRLHMAALEREEFRVLYLDNQNQLIAHETLFTGTINRTEVHPREVVKRALHFNAAAVILAHNHPSGETTPSQADKTLTQRLVQVLQLVDIRVPDHLIVGGRQIYSFAEHGLL.

The MPN domain maps to alanine 36–leucine 158. Positions 107, 109, and 120 each coordinate Zn(2+). Positions histidine 107–aspartate 120 match the JAMM motif motif.

Belongs to the UPF0758 family.

In Escherichia coli (strain K12), this protein is UPF0758 protein YkfG (ykfG).